We begin with the raw amino-acid sequence, 878 residues long: Protein translocase subunit SecA (878 aa).

ATP is bound by residues glutamine 79, 97–101, and aspartate 487; that span reads GEGKT.

The protein belongs to the SecA family.

It is found in the plastid. Its subcellular location is the chloroplast stroma. The protein resides in the chloroplast thylakoid membrane. The catalysed reaction is ATP + H2O + cellular proteinSide 1 = ADP + phosphate + cellular proteinSide 2.. In terms of biological role, has a central role in coupling the hydrolysis of ATP to the transfer of proteins across the thylakoid membrane. The protein is Protein translocase subunit SecA of Antithamnion sp. (Red alga).